The following is a 215-amino-acid chain: Ras-related protein Rab-5A (215 aa).

Residues serine 29, alanine 30, glycine 32, lysine 33, serine 34, serine 35, histidine 46, glutamate 47, threonine 52, and glycine 78 each coordinate GTP. Serine 34 contacts Mg(2+). Short sequence motifs (switch) lie at residues 44–56 and 77–93; these read QFHEFQESTIGAA and AGQERYHSLAPMYYRGA. Threonine 52 lines the Mg(2+) pocket. Phosphoserine; by LRRK2 is present on serine 84. A (Microbial infection) N-beta-linked (GlcNAc) arginine glycan is attached at arginine 120. Positions 133, 134, 136, 164, and 165 each coordinate GTP. The tract at residues 181-215 is disordered; sequence LPKNEPQNPGANSARGRGVDLTEPTQPTRNQCCSN. Residues 203-215 show a composition bias toward polar residues; it reads EPTQPTRNQCCSN. Residues cysteine 212 and cysteine 213 are each lipidated (S-geranylgeranyl cysteine).

Belongs to the small GTPase superfamily. Rab family. As to quaternary structure, interacts with SGSM1 and SGSM3. Interacts with PIK3CB. Interacts with GDI1; this promotes dissociation from membranes; phosphorylation at Ser-84 disrupts this interaction. Interacts with GDI2; phosphorylation at Ser-84 disrupts the interaction. Interacts with EEA1. Interacts with RIN1 and GAPVD1, which regulate its pathway, probably by acting as a GEF. Interacts with RINL. Interacts with ALS2CL, SUN2, ZFYVE20 and RUFY1. Interacts with RABEP1; one RABEP1 homodimer binds two RAB5A chains, but at opposite sides of the dimer. Interacts with OCRL. Interacts with INPP5F. May be a component of a complex composed of RAB5A, DYN2 and PIK3C3. Does not interact with BLOC-3 complex (heterodimer of HPS1 and HPS4). Interacts with CLN5. Interacts with APPL2. Interacts with F8A1/F8A2/F8A3. Found in a complex with F8A1/F8A2/F8A3, HTT and RAB5A; mediates the recruitment of HTT by RAB5A onto early endosomes. Interacts with ATP9A. Interacts with PPP1R21; mediates the recruitment of FERRY complex by RAB5A onto early endosomes. Requires Mg(2+) as cofactor. In terms of processing, phosphorylation of Ser-84 in the switch II region by LRRK2 prevents the association of RAB regulatory proteins, including RAB GDP dissociation inhibitors GDI1 and GDI2. Post-translationally, (Microbial infection) Glycosylated on arginine residues by S.typhimurium protein Ssek3.

It localises to the cell membrane. It is found in the early endosome membrane. The protein localises to the melanosome. Its subcellular location is the cytoplasmic vesicle. The protein resides in the cell projection. It localises to the ruffle. It is found in the membrane. The protein localises to the cytoplasm. Its subcellular location is the cytosol. The protein resides in the phagosome membrane. It localises to the endosome membrane. The enzyme catalyses GTP + H2O = GDP + phosphate + H(+). With respect to regulation, regulated by guanine nucleotide exchange factors (GEFs) including RINL, which promote the exchange of bound GDP for free GTP. Regulated by GTPase activating proteins (GAPs) which increase the GTP hydrolysis activity. Inhibited by GDP dissociation inhibitors (GDIs). The small GTPases Rab are key regulators of intracellular membrane trafficking, from the formation of transport vesicles to their fusion with membranes. Rabs cycle between an inactive GDP-bound form and an active GTP-bound form that is able to recruit to membranes different sets of downstream effectors directly responsible for vesicle formation, movement, tethering and fusion. RAB5A is required for the fusion of plasma membranes and early endosomes. Contributes to the regulation of filopodia extension. Required for the exosomal release of SDCBP, CD63, PDCD6IP and syndecan. Regulates maturation of apoptotic cell-containing phagosomes, probably downstream of DYN2 and PIK3C3. The chain is Ras-related protein Rab-5A from Homo sapiens (Human).